The primary structure comprises 387 residues: uncharacterized protein (387 aa).

This sequence belongs to the geranylgeranyl reductase family. ChlP subfamily.

This is an uncharacterized protein from Methanocaldococcus jannaschii (strain ATCC 43067 / DSM 2661 / JAL-1 / JCM 10045 / NBRC 100440) (Methanococcus jannaschii).